Here is a 361-residue protein sequence, read N- to C-terminus: Phosphoserine aminotransferase (361 aa).

An L-glutamate-binding site is contributed by R42. Residues 76-77 (AT), W102, T152, D172, and Q195 each bind pyridoxal 5'-phosphate. At K196 the chain carries N6-(pyridoxal phosphate)lysine. 237-238 (NT) serves as a coordination point for pyridoxal 5'-phosphate.

Belongs to the class-V pyridoxal-phosphate-dependent aminotransferase family. SerC subfamily. In terms of assembly, homodimer. Pyridoxal 5'-phosphate serves as cofactor.

It is found in the cytoplasm. The enzyme catalyses O-phospho-L-serine + 2-oxoglutarate = 3-phosphooxypyruvate + L-glutamate. It carries out the reaction 4-(phosphooxy)-L-threonine + 2-oxoglutarate = (R)-3-hydroxy-2-oxo-4-phosphooxybutanoate + L-glutamate. It participates in amino-acid biosynthesis; L-serine biosynthesis; L-serine from 3-phospho-D-glycerate: step 2/3. The protein operates within cofactor biosynthesis; pyridoxine 5'-phosphate biosynthesis; pyridoxine 5'-phosphate from D-erythrose 4-phosphate: step 3/5. Functionally, catalyzes the reversible conversion of 3-phosphohydroxypyruvate to phosphoserine and of 3-hydroxy-2-oxo-4-phosphonooxybutanoate to phosphohydroxythreonine. The sequence is that of Phosphoserine aminotransferase from Xanthomonas oryzae pv. oryzae (strain MAFF 311018).